The following is a 499-amino-acid chain: Bifunctional purine biosynthesis protein PurH (499 aa).

Residues 1 to 144 (MIKRALISVF…KNFKDVVVLT (144 aa)) form the MGS-like domain.

The protein belongs to the PurH family.

The enzyme catalyses (6R)-10-formyltetrahydrofolate + 5-amino-1-(5-phospho-beta-D-ribosyl)imidazole-4-carboxamide = 5-formamido-1-(5-phospho-D-ribosyl)imidazole-4-carboxamide + (6S)-5,6,7,8-tetrahydrofolate. The catalysed reaction is IMP + H2O = 5-formamido-1-(5-phospho-D-ribosyl)imidazole-4-carboxamide. Its pathway is purine metabolism; IMP biosynthesis via de novo pathway; 5-formamido-1-(5-phospho-D-ribosyl)imidazole-4-carboxamide from 5-amino-1-(5-phospho-D-ribosyl)imidazole-4-carboxamide (10-formyl THF route): step 1/1. It functions in the pathway purine metabolism; IMP biosynthesis via de novo pathway; IMP from 5-formamido-1-(5-phospho-D-ribosyl)imidazole-4-carboxamide: step 1/1. The protein is Bifunctional purine biosynthesis protein PurH of Clostridium botulinum (strain Langeland / NCTC 10281 / Type F).